We begin with the raw amino-acid sequence, 144 residues long: Transcriptional regulator MraZ (144 aa).

2 SpoVT-AbrB domains span residues 5–50 and 81–124; these read TFNH…ALPQ and AHEV…DRAA.

It belongs to the MraZ family. As to quaternary structure, forms oligomers.

The protein resides in the cytoplasm. The protein localises to the nucleoid. The polypeptide is Transcriptional regulator MraZ (Anaeromyxobacter dehalogenans (strain 2CP-C)).